A 323-amino-acid chain; its full sequence is Aldo-keto reductase family 1 member C2 (323 aa).

NADP(+)-binding positions include G20–Y24 and D50. A substrate-binding site is contributed by Y24. The active-site Proton donor is the Y55. H117 is a binding site for substrate. NADP(+)-binding positions include S166 to N167, Q190, and Y216 to H222. Substrate is bound by residues H222 and W227. K270–N280 contributes to the NADP(+) binding site.

Belongs to the aldo/keto reductase family. Expressed in fetal testes. Expressed in fetal and adult adrenal glands.

It localises to the cytoplasm. It is found in the cytosol. It carries out the reaction a 3alpha-hydroxysteroid + NADP(+) = a 3-oxosteroid + NADPH + H(+). The enzyme catalyses a 3alpha-hydroxysteroid + NAD(+) = a 3-oxosteroid + NADH + H(+). It catalyses the reaction 5alpha-androstane-3alpha,17beta-diol + NADP(+) = 17beta-hydroxy-5alpha-androstan-3-one + NADPH + H(+). The catalysed reaction is 5alpha-androstane-3alpha,17beta-diol + NAD(+) = 17beta-hydroxy-5alpha-androstan-3-one + NADH + H(+). It carries out the reaction 5alpha-androstane-3alpha,17beta-diol + NAD(+) = androsterone + NADH + H(+). The enzyme catalyses 17beta-estradiol + NADP(+) = estrone + NADPH + H(+). It catalyses the reaction 17beta-estradiol + NAD(+) = estrone + NADH + H(+). The catalysed reaction is (20S)-hydroxypregn-4-en-3-one + NADP(+) = progesterone + NADPH + H(+). It carries out the reaction (20S)-hydroxypregn-4-en-3-one + NAD(+) = progesterone + NADH + H(+). The enzyme catalyses androsterone + NADP(+) = 5alpha-androstan-3,17-dione + NADPH + H(+). It catalyses the reaction (3beta,5alpha,17beta)-3-hydroxy-androstan-17-yl sulfate + NADP(+) = 5alpha-dihydrotestosterone sulfate + NADPH + H(+). The catalysed reaction is (1R,2R)-1,2-dihydrobenzene-1,2-diol + NADP(+) = catechol + NADPH + H(+). It carries out the reaction (S)-indan-1-ol + NAD(+) = indan-1-one + NADH + H(+). The enzyme catalyses (S)-indan-1-ol + NADP(+) = indan-1-one + NADPH + H(+). It functions in the pathway steroid metabolism. With respect to regulation, inhibited by hexestrol with an IC(50) of 2.8 uM, 1,10-phenanthroline with an IC(50) of 2100 uM, 1,7-phenanthroline with an IC(50) of 1500 uM, flufenamic acid with an IC(50) of 0.9 uM, indomethacin with an IC(50) of 75 uM, ibuprofen with an IC(50) of 6.9 uM, lithocholic acid with an IC(50) of 0.07 uM, ursodeoxycholic acid with an IC(50) of 0.08 uM and chenodeoxycholic acid with an IC(50) of 0.13 uM. The oxidation reaction is inhibited by low micromolar concentrations of NADPH. Functionally, cytosolic aldo-keto reductase that catalyzes the NADH and NADPH-dependent reduction of ketosteroids to hydroxysteroids. Most probably acts as a reductase in vivo since the oxidase activity measured in vitro is inhibited by physiological concentrations of NADPH. Displays a broad positional specificity acting on positions 3, 17 and 20 of steroids and regulates the metabolism of hormones like estrogens and androgens. Works in concert with the 5-alpha/5-beta-steroid reductases to convert steroid hormones into the 3-alpha/5-alpha and 3-alpha/5-beta-tetrahydrosteroids. Catalyzes the inactivation of the most potent androgen 5-alpha-dihydrotestosterone (5-alpha-DHT) to 5-alpha-androstane-3-alpha,17-beta-diol (3-alpha-diol). Also specifically able to produce 17beta-hydroxy-5alpha-androstan-3-one/5alphaDHT. May also reduce conjugated steroids such as 5alpha-dihydrotestosterone sulfate. Displays affinity for bile acids. This Homo sapiens (Human) protein is Aldo-keto reductase family 1 member C2 (AKR1C2).